The sequence spans 581 residues: MAARSWQDELAQQAEEGSARLRELLSVGLGFLRTELGLDLGLEPKRYPSWVILVGTGALGLLLLFLLGYGWAAACAGARKKRRSPPRKREEVTPPTPAPEDPAQLKNLRSEEQKKKNRKKLPEKPKPNGRTVEIPEDEVVRTPRSITAKQPPETDKKNEKSKKNKKKSKSDAKAVQNSSRHDGKEVDEGAWETKISHREKRQQRKRDKVLTDSGSLDSTIPGIENTITVTTEQLTTASFPVGSKKNKGDSHLNVQVSNFKSGKGDSTLQVSSGLNENITVNGGGWSEKSVKLSSQLSAGEEKWNSVPPASAGKRKTEQSAWTQDPGDTNANGKDWGRNWSDRSIFSGIGSTAEPVSQSTTSDYQWDGSRNQPHIDDEWSGLNGLSSADPSSDWNAPAEEWGNWVDEDRASLLKSQEPISNDQKDSDDDKEKGEGALPTGKSKKKKKKKKKQGEDNSITQDTEDLEKDTREELPVNTSKARPKQEKACSLKTMSTSDPVEVLIKNSQPIKTLPPAISAEPSVTLSKGDSDKSSSQVPPMLQDTDKPKSNAKQNSVPPSQTKSETNWESPKQIKKKKKARRET.

The Lumenal segment spans residues 1 to 49; the sequence is MAARSWQDELAQQAEEGSARLRELLSVGLGFLRTELGLDLGLEPKRYPS. An activation of NF-kappa-B region spans residues 1-71; it reads MAARSWQDEL…LLLFLLGYGW (71 aa). The helical transmembrane segment at 50-70 threads the bilayer; that stretch reads WVILVGTGALGLLLLFLLGYG. Residues 71–581 are Cytoplasmic-facing; sequence WAAACAGARK…KKKKKARRET (511 aa). The interaction with BCCIP stretch occupies residues 72-168; it reads AAACAGARKK…EKSKKNKKKS (97 aa). A disordered region spans residues 77–221; sequence GARKKRRSPP…DSGSLDSTIP (145 aa). Residues 100-204 form an interaction with RELA region; that stretch reads EDPAQLKNLR…ISHREKRQQR (105 aa). Positions 108-126 are enriched in basic and acidic residues; it reads LRSEEQKKKNRKKLPEKPK. The residue at position 142 (T142) is a Phosphothreonine. Residues 159–168 show a composition bias toward basic residues; that stretch reads EKSKKNKKKS. The residue at position 179 (S179) is a Phosphoserine. The span at 197 to 207 shows a compositional bias: basic residues; it reads HREKRQQRKRD. S215 and S250 each carry phosphoserine. K263 carries the post-translational modification N6-acetyllysine. A disordered region spans residues 280 to 581; sequence VNGGGWSEKS…KKKKKARRET (302 aa). S297, S305, and S310 each carry phosphoserine. Over residues 318 to 331 the composition is skewed to polar residues; it reads QSAWTQDPGDTNAN. Phosphoserine occurs at positions 343 and 368. Polar residues-rich tracts occupy residues 353–371 and 382–393; these read EPVSQSTTSDYQWDGSRNQ and NGLSSADPSSDW. A lung-homing for mammary tumors region spans residues 380–442; it reads GLNGLSSADP…EGALPTGKSK (63 aa). A phosphoserine mark is found at S414 and S425. The segment covering 421 to 433 has biased composition (basic and acidic residues); sequence DQKDSDDDKEKGE. Basic residues predominate over residues 440 to 450; sequence KSKKKKKKKKK. A phosphoserine mark is found at S456, S477, S493, and S495. 2 stretches are compositionally biased toward polar residues: residues 519 to 535 and 548 to 567; these read PSVTLSKGDSDKSSSQV and NAKQNSVPPSQTKSETNWES. S567 carries the phosphoserine modification. A compositionally biased stretch (basic residues) spans 570-581; sequence QIKKKKKARRET.

In terms of assembly, interacts with BCCIP, CREBBP/CBP and RELA/p65. Widely expressed, with highest levels in liver, kidney, prostate and small intestine. Not detected in endothelial cells.

The protein resides in the endoplasmic reticulum membrane. It localises to the nucleus membrane. It is found in the cell junction. The protein localises to the tight junction. Its subcellular location is the nucleus. The protein resides in the nucleolus. It localises to the cytoplasm. It is found in the perinuclear region. Down-regulates SLC1A2/EAAT2 promoter activity when expressed ectopically. Activates the nuclear factor kappa-B (NF-kappa-B) transcription factor. Promotes anchorage-independent growth of immortalized melanocytes and astrocytes which is a key component in tumor cell expansion. Promotes lung metastasis and also has an effect on bone and brain metastasis, possibly by enhancing the seeding of tumor cells to the target organ endothelium. Induces chemoresistance. This chain is Protein LYRIC (Mtdh), found in Rattus norvegicus (Rat).